The sequence spans 85 residues: Major outer membrane protein 1 (85 aa).

Residues 1–18 (MEAREVEEMRRSRLLTLG) form the signal peptide. The helical transmembrane segment at 22-42 (YTAVIALAALVLVMGALGLVL) threads the bilayer.

Forms extremely stable complexes with apparent masses of 150, 50, 45 and 38 kDa. Found in a ring-shaped complex of 7 nm diameter with a 2 nm channel through the middle. Complete denaturation requires temperatures over 110 degrees Celsius.

Its subcellular location is the cell outer membrane. Its function is as follows. The most abundant protein of the outer membrane, it forms a pore through it. The polypeptide is Major outer membrane protein 1 (ihomp1) (Ignicoccus hospitalis (strain KIN4/I / DSM 18386 / JCM 14125)).